Consider the following 603-residue polypeptide: NADH-quinone oxidoreductase subunit C/D (603 aa).

Residues M1 to E193 are NADH dehydrogenase I subunit C. The interval D217–R603 is NADH dehydrogenase I subunit D.

In the N-terminal section; belongs to the complex I 30 kDa subunit family. This sequence in the C-terminal section; belongs to the complex I 49 kDa subunit family. NDH-1 is composed of 13 different subunits. Subunits NuoB, CD, E, F, and G constitute the peripheral sector of the complex.

The protein resides in the cell inner membrane. The catalysed reaction is a quinone + NADH + 5 H(+)(in) = a quinol + NAD(+) + 4 H(+)(out). In terms of biological role, NDH-1 shuttles electrons from NADH, via FMN and iron-sulfur (Fe-S) centers, to quinones in the respiratory chain. The immediate electron acceptor for the enzyme in this species is believed to be ubiquinone. Couples the redox reaction to proton translocation (for every two electrons transferred, four hydrogen ions are translocated across the cytoplasmic membrane), and thus conserves the redox energy in a proton gradient. The protein is NADH-quinone oxidoreductase subunit C/D of Cronobacter sakazakii (strain ATCC BAA-894) (Enterobacter sakazakii).